The following is an 890-amino-acid chain: DNA mismatch repair protein MutS (890 aa).

607–614 provides a ligand contact to ATP; it reads GPNMSGKS.

Belongs to the DNA mismatch repair MutS family.

Its function is as follows. This protein is involved in the repair of mismatches in DNA. It is possible that it carries out the mismatch recognition step. This protein has a weak ATPase activity. This chain is DNA mismatch repair protein MutS, found in Bacillus mycoides (strain KBAB4) (Bacillus weihenstephanensis).